The sequence spans 2175 residues: Non-reducing polyketide synthase PKS1 (2175 aa).

Positions 5–242 (LLFGDQTAEQ…VSIPIYGPYH (238 aa)) are N-terminal acylcarrier protein transacylase domain (SAT). The region spanning 369 to 801 (TDKIAIVGMA…GGNTALLIED (433 aa)) is the Ketosynthase family 3 (KS3) domain. Active-site for beta-ketoacyl synthase activity residues include C541, H676, and H719. Positions 900–1212 (FCFTGQGSQY…ISTSICHLFT (313 aa)) are malonyl-CoA:ACP transacylase (MAT) domain. Catalysis depends on S988, which acts as the For acyl/malonyl transferase activity. The tract at residues 1285-1604 (STSCQNVISE…RKVLNVFLPP (320 aa)) is product template (PT) domain. The N-terminal hotdog fold stretch occupies residues 1289 to 1424 (QNVISEEFDG…CTIRYEDKAV (136 aa)). Residues 1289–1599 (QNVISEEFDG…FQQIPRKVLN (311 aa)) form the PKS/mFAS DH domain. Residue H1321 is the Proton acceptor; for dehydratase activity of the active site. The tract at residues 1452–1599 (AHKVQRGMAY…FQQIPRKVLN (148 aa)) is C-terminal hotdog fold. D1512 serves as the catalytic Proton donor; for dehydratase activity. The segment at 1640-1664 (PVRKSAGPAKAAAAPSMPKPSKVAA) is disordered. Residues 1643 to 1664 (KSAGPAKAAAAPSMPKPSKVAA) are compositionally biased toward low complexity. The 78-residue stretch at 1666-1743 (KPAGSMVDKV…EMKKYFSQFN (78 aa)) folds into the Carrier 1 domain. Residue S1703 is modified to O-(pantetheine 4'-phosphoryl)serine. The disordered stretch occupies residues 1766–1804 (ATPFDEMSTPASSAPSVPQSDAGKPSPDSPTGDSLSDDV). Positions 1774–1784 (TPASSAPSVPQ) are enriched in polar residues. One can recognise a Carrier 2 domain in the interval 1801–1878 (SDDVGDVSIA…DIENALGMRP (78 aa)). The residue at position 1838 (S1838) is an O-(pantetheine 4'-phosphoryl)serine. Positions 1879-1899 (KPKAVGPKLSKPSTKTDMNEV) are disordered. The segment covering 1889-1899 (KPSTKTDMNEV) has biased composition (polar residues). Residues 1932–2158 (KVFFLPDGSG…GHHFSMMKDP (227 aa)) are claisen cyclase domain. The active-site For Claisen cyclase activity is the S2002.

The cofactor is pantetheine 4'-phosphate.

The catalysed reaction is 6 malonyl-CoA + acetyl-CoA + 6 H(+) = naphtopyrone YWA1 + 6 CO2 + 7 CoA + H2O. Its pathway is pigment biosynthesis; melanin biosynthesis. Functionally, non-reducing polyketide synthase; part of the gene cluster 29 that mediates the biosynthesis of mediates the biosynthesis of dihydroxynaphthalene (DHN)-melanin, a bluish-green pigment and a structural component of the conidial wall. The first step of the pathway is the production of the heptaketide naphtopyrone YWA1 by the polyketide synthase PKS1 though condensation of acetyl-CoA with malonyl-CoA. In Zymoseptoria tritici (strain CBS 115943 / IPO323) (Speckled leaf blotch fungus), this protein is Non-reducing polyketide synthase PKS1.